The following is a 376-amino-acid chain: Anhydro-N-acetylmuramic acid kinase (376 aa).

16–23 contacts ATP; the sequence is GTSMDGVD.

It belongs to the anhydro-N-acetylmuramic acid kinase family.

The enzyme catalyses 1,6-anhydro-N-acetyl-beta-muramate + ATP + H2O = N-acetyl-D-muramate 6-phosphate + ADP + H(+). It participates in amino-sugar metabolism; 1,6-anhydro-N-acetylmuramate degradation. Its pathway is cell wall biogenesis; peptidoglycan recycling. In terms of biological role, catalyzes the specific phosphorylation of 1,6-anhydro-N-acetylmuramic acid (anhMurNAc) with the simultaneous cleavage of the 1,6-anhydro ring, generating MurNAc-6-P. Is required for the utilization of anhMurNAc either imported from the medium or derived from its own cell wall murein, and thus plays a role in cell wall recycling. This Paraburkholderia xenovorans (strain LB400) protein is Anhydro-N-acetylmuramic acid kinase.